The sequence spans 425 residues: Ribulose bisphosphate carboxylase/oxygenase activase B, chloroplastic (425 aa).

The N-terminal 43 residues, 1-43, are a transit peptide targeting the chloroplast; sequence MASAFSSTVGAPASTPTIFLGKKVKNYYHGGNKMKSRVVRVMA. Residue 153-160 coordinates ATP; the sequence is GGKGQGKS.

It belongs to the RuBisCO activase family.

Its subcellular location is the plastid. It localises to the chloroplast stroma. Functionally, activation of RuBisCO (ribulose-1,5-bisphosphate carboxylase/oxygenase; EC 4.1.1.39) involves the ATP-dependent carboxylation of the epsilon-amino group of lysine leading to a carbamate structure. The chain is Ribulose bisphosphate carboxylase/oxygenase activase B, chloroplastic (RCAB) from Hordeum vulgare (Barley).